Here is a 1207-residue protein sequence, read N- to C-terminus: DNA-directed RNA polymerase subunit beta (1207 aa).

The protein belongs to the RNA polymerase beta chain family. The RNAP catalytic core consists of 2 alpha, 1 beta, 1 beta' and 1 omega subunit. When a sigma factor is associated with the core the holoenzyme is formed, which can initiate transcription.

The enzyme catalyses RNA(n) + a ribonucleoside 5'-triphosphate = RNA(n+1) + diphosphate. DNA-dependent RNA polymerase catalyzes the transcription of DNA into RNA using the four ribonucleoside triphosphates as substrates. This Enterococcus faecalis (strain ATCC 700802 / V583) protein is DNA-directed RNA polymerase subunit beta.